A 671-amino-acid polypeptide reads, in one-letter code: UvrABC system protein B (671 aa).

The Helicase ATP-binding domain occupies 31–189 (KGFEEGKKEQ…QLVDIQFDRN (159 aa)). Residue 44–51 (GATGTGKT) participates in ATP binding. A Beta-hairpin motif is present at residues 97 to 120 (YYDYYQPEAYVPSTDTYIEKDSAI). Positions 437–599 (QIDDLVGEIN…ITPKTIIKPI (163 aa)) constitute a Helicase C-terminal domain. The UVR domain occupies 634 to 669 (KELVANLRSQMQAAAKKLDFEQAASLRDTILELQAD).

It belongs to the UvrB family. In terms of assembly, forms a heterotetramer with UvrA during the search for lesions. Interacts with UvrC in an incision complex.

It localises to the cytoplasm. In terms of biological role, the UvrABC repair system catalyzes the recognition and processing of DNA lesions. A damage recognition complex composed of 2 UvrA and 2 UvrB subunits scans DNA for abnormalities. Upon binding of the UvrA(2)B(2) complex to a putative damaged site, the DNA wraps around one UvrB monomer. DNA wrap is dependent on ATP binding by UvrB and probably causes local melting of the DNA helix, facilitating insertion of UvrB beta-hairpin between the DNA strands. Then UvrB probes one DNA strand for the presence of a lesion. If a lesion is found the UvrA subunits dissociate and the UvrB-DNA preincision complex is formed. This complex is subsequently bound by UvrC and the second UvrB is released. If no lesion is found, the DNA wraps around the other UvrB subunit that will check the other stand for damage. This is UvrABC system protein B from Lacticaseibacillus casei (strain BL23) (Lactobacillus casei).